A 403-amino-acid chain; its full sequence is Myeloid cell surface antigen CD33 (403 aa).

Residues 1-16 form the signal peptide; that stretch reads MLWPLPLFLLCAGSLA. One can recognise an Ig-like V-type domain in the interval 17 to 120; the sequence is QDLEFQLVAP…DTGMYFFRVV (104 aa). Topologically, residues 18 to 240 are extracellular; that stretch reads DLEFQLVAPE…VTRKSGQMRE (223 aa). Disulfide bonds link cysteine 36–cysteine 169, cysteine 41–cysteine 100, and cysteine 163–cysteine 212. Asparagine 110 is a glycosylation site (N-linked (GlcNAc...) asparagine). N-acetylneuraminate is bound at residue arginine 118. Residues 145-228 form the Ig-like C2-type domain; it reads PDIIIPGTLE…AGVTVERTIQ (84 aa). Residue asparagine 160 is glycosylated (N-linked (GlcNAc...) asparagine). Asparagine 230 carries N-linked (GlcNAc...) asparagine glycosylation. A helical transmembrane segment spans residues 241–267; sequence LVLVAVGEATVKLLILGLCLVFLIVMF. Residues 268–403 are Cytoplasmic-facing; it reads CRRKTTKLSV…MLLCVSLTLS (136 aa).

It belongs to the immunoglobulin superfamily. SIGLEC (sialic acid binding Ig-like lectin) family. Homodimer; disulfide-linked. Interacts with PTPN6/SHP-1 and PTPN11/SHP-2 upon phosphorylation. Interacts with C1QA (via C-terminus); this interaction activates CD33 inhibitory motifs. In terms of processing, glycosylated. Phosphorylation is involved in binding to PTPN6 and PTPN11. Expressed on myeloid precursors in the bone marrow. In the peripheral blood, mostly expressed on granulocytes.

It localises to the cell membrane. In terms of biological role, sialic-acid-binding immunoglobulin-like lectin (Siglec) that plays a role in mediating cell-cell interactions and in maintaining immune cells in a resting state. Preferentially binds sialic acid to the short O-linked glycans of certain mucins. The polypeptide is Myeloid cell surface antigen CD33 (Cd33) (Mus musculus (Mouse)).